A 234-amino-acid chain; its full sequence is uncharacterized protein (234 aa).

6 helical membrane-spanning segments follow: residues 5-23, 38-60, 73-92, 127-149, 170-192, and 197-217; these read LFYI…LWSF, IPTA…GFWV, AHIQ…AHGW, AITL…YIWL, GVAI…TVIS, and TQAG…ALAF.

It is found in the cell membrane. This is an uncharacterized protein from Archaeoglobus fulgidus (strain ATCC 49558 / DSM 4304 / JCM 9628 / NBRC 100126 / VC-16).